A 140-amino-acid polypeptide reads, in one-letter code: Small ribosomal subunit protein bS6 (140 aa).

The tract at residues 96–140 (VTGQSEMLKAEENRSERRERRDRPEHEGADSADSDDSDNSDNADE) is disordered. Positions 103 to 124 (LKAEENRSERRERRDRPEHEGA) are enriched in basic and acidic residues. The segment covering 125-140 (DSADSDDSDNSDNADE) has biased composition (acidic residues).

The protein belongs to the bacterial ribosomal protein bS6 family.

Its function is as follows. Binds together with bS18 to 16S ribosomal RNA. The chain is Small ribosomal subunit protein bS6 from Pseudomonas fluorescens (strain SBW25).